A 601-amino-acid chain; its full sequence is DNA ligase (601 aa).

D258 lines the ATP pocket. Residue K260 is the N6-AMP-lysine intermediate of the active site. ATP is bound by residues R265, R280, E310, F350, R427, and K433. The interval 568–601 is disordered; it reads DKSPEDATTTDEILEMYNKQPKKKIESPPIDESV.

Belongs to the ATP-dependent DNA ligase family. Mg(2+) is required as a cofactor.

The catalysed reaction is ATP + (deoxyribonucleotide)n-3'-hydroxyl + 5'-phospho-(deoxyribonucleotide)m = (deoxyribonucleotide)n+m + AMP + diphosphate.. DNA ligase that seals nicks in double-stranded DNA during DNA replication, DNA recombination and DNA repair. This is DNA ligase from Saccharolobus islandicus (strain L.S.2.15 / Lassen #1) (Sulfolobus islandicus).